Here is a 740-residue protein sequence, read N- to C-terminus: MSIEYVQLQLASPSEIKRWSQRILPTGEVVGEISKADTINYRTFKPERGGLFCERIFGSTSNGECSCGKTKRRKLIVPVNFNRLTLQKRNAELEATQAIIEVCPSCGVEPTNSKVRRYRMGCISLKKPVAHMWYFRNSPNVLAALLNMRSQEIDETIHFQTYTPSKYGTQNYCLHGGVQWYVNHWEPMHPYFAGDIDVSMDKAASWNSKSTFMPSQIKTIENCGGEALQELLTRLDLVFLQRMLSRKLKNTIEKKKLAAKSLRKRHKRRKTAKLLGRTDQKNYGITIKVREYSRRLEFIRSLARKGLRPEWMILSIFPVLPPDLRPMIQMSSGRFATSDLNDLYRRLIYRKIRFEKFLTLFDEEFLPDLLIRHDLCLLQEAADSIIDNGRLDKPAQRPNRKPFKSLTSIIEGKHGRFRQNLLGKRVDYSGRSVIVVGPKLRLHQCGLPREMALELFQPFVIRALLEESGVKNIRAAKNLLQRRSQMVWDILDTVVLGHPVLLNRAPTLHRLGIQAFEPILLSGRAIQLHPLVCPAFNADFDGDQMAVHVPLGLEAQAEARLLMLATHNWLSPATGEPSILPSQDMILGFYYLTTLKPTVSLKRPVEQPMAVRGRNLIQSNSIFNNFESVLHAYETSKVDLHEIIWLRWSSYIQTTNSEPLQITVNKTGHVTTVYDSFVMQSGATNGPDNSMLSVQMKSRDTSSISKVYNCLTSLNAAAFYILTTPGRVLFNNLIYENLFL.

Zn(2+)-binding residues include Cys-65, Cys-67, Cys-103, and Cys-106. Positions 539, 541, and 543 each coordinate Mg(2+).

Belongs to the RNA polymerase beta' chain family. RpoC1 subfamily. In terms of assembly, in plastids the minimal PEP RNA polymerase catalytic core is composed of four subunits: alpha, beta, beta', and beta''. When a (nuclear-encoded) sigma factor is associated with the core the holoenzyme is formed, which can initiate transcription. Requires Mg(2+) as cofactor. It depends on Zn(2+) as a cofactor.

The protein resides in the plastid. It localises to the chloroplast. It catalyses the reaction RNA(n) + a ribonucleoside 5'-triphosphate = RNA(n+1) + diphosphate. DNA-dependent RNA polymerase catalyzes the transcription of DNA into RNA using the four ribonucleoside triphosphates as substrates. The polypeptide is DNA-directed RNA polymerase subunit beta' (Ostreococcus tauri).